Reading from the N-terminus, the 80-residue chain is Defensin-like protein 50 (80 aa).

Residues 1 to 27 (MGFTKIVVTFFLVVMLAVSSSSQNAMA) form the signal peptide. 4 cysteine pairs are disulfide-bonded: Cys39–Cys79, Cys43–Cys66, Cys52–Cys77, and Cys56–Cys78.

The protein belongs to the DEFL family.

It localises to the secreted. In Arabidopsis thaliana (Mouse-ear cress), this protein is Defensin-like protein 50 (LCR49).